A 260-amino-acid chain; its full sequence is Proteasome subunit alpha type-1 (260 aa).

The interval 240–260 (PRTTGGAAAAAAPGGAEPMQM) is disordered. Low complexity predominate over residues 244–260 (GGAAAAAAPGGAEPMQM).

It belongs to the peptidase T1A family. The 26S proteasome consists of a 20S proteasome core and two 19S regulatory subunits. The 20S proteasome core is composed of 28 subunits that are arranged in four stacked rings, resulting in a barrel-shaped structure. The two end rings are each formed by seven alpha subunits, and the two central rings are each formed by seven beta subunits. The catalytic chamber with the active sites is on the inside of the barrel.

The protein resides in the cytoplasm. Its subcellular location is the nucleus. In terms of biological role, the proteasome is a multicatalytic proteinase complex which is characterized by its ability to cleave peptides with Arg, Phe, Tyr, Leu, and Glu adjacent to the leaving group at neutral or slightly basic pH. The proteasome has an ATP-dependent proteolytic activity. The polypeptide is Proteasome subunit alpha type-1 (pas-6) (Caenorhabditis elegans).